The following is a 386-amino-acid chain: MSKNYLFTSESVSEGHPDKLADQISDAILDEILKQDKNARVACETLVKTGMALVAGEITTSAWVDIEELVRNVITETGYDNASKGIDGRTCSVINAIGKQSRDIAQGVDRGSLEDLGAGDQGLMFGFATNETPTLMPSAIYYSHLLMRKQAELRKSGKLAWLRPDAKAQVTLAYENDKPKFIDTIVLSTQHNESISQKELHDAVIEEIVKKVIPNELITKDTKYHINPTGVFLIGGPQGDCGLTGRKIIVDTYGGAAHHGGGAFSGKDPSKVDRSGAYMGRYIAKNIVAAGLADKCEVQVAYAIGVAKPVSLMVNTFGTGKITDNQIEKLVAEVFDLRVGKIIENLDLLRPIYRKTSNYGHFGRELPEFTWEKIDKADILKSAARI.

Residue histidine 16 participates in ATP binding. Aspartate 18 contacts Mg(2+). Glutamate 44 is a binding site for K(+). L-methionine is bound by residues glutamate 57 and glutamine 100. Residues 100–110 form a flexible loop region; the sequence is QSRDIAQGVDR. Residues 165–167, aspartate 240, 246–247, alanine 263, and lysine 267 contribute to the ATP site; these read DAK and RK. Residue aspartate 240 participates in L-methionine binding. Lysine 271 serves as a coordination point for L-methionine.

It belongs to the AdoMet synthase family. As to quaternary structure, homotetramer; dimer of dimers. The cofactor is Mg(2+). Requires K(+) as cofactor.

The protein resides in the cytoplasm. The catalysed reaction is L-methionine + ATP + H2O = S-adenosyl-L-methionine + phosphate + diphosphate. It functions in the pathway amino-acid biosynthesis; S-adenosyl-L-methionine biosynthesis; S-adenosyl-L-methionine from L-methionine: step 1/1. Its function is as follows. Catalyzes the formation of S-adenosylmethionine (AdoMet) from methionine and ATP. The overall synthetic reaction is composed of two sequential steps, AdoMet formation and the subsequent tripolyphosphate hydrolysis which occurs prior to release of AdoMet from the enzyme. The chain is S-adenosylmethionine synthase from Francisella tularensis subsp. holarctica (strain FTNF002-00 / FTA).